Reading from the N-terminus, the 161-residue chain is ATP synthase subunit b' (161 aa).

The chain crosses the membrane as a helical span at residues 26 to 45 (LPLMAIQFLLLAFVLDKIFY).

It belongs to the ATPase B chain family. In terms of assembly, F-type ATPases have 2 components, F(1) - the catalytic core - and F(0) - the membrane proton channel. F(1) has five subunits: alpha(3), beta(3), gamma(1), delta(1), epsilon(1). F(0) has four main subunits: a(1), b(1), b'(1) and c(10-14). The alpha and beta chains form an alternating ring which encloses part of the gamma chain. F(1) is attached to F(0) by a central stalk formed by the gamma and epsilon chains, while a peripheral stalk is formed by the delta, b and b' chains.

The protein resides in the cellular thylakoid membrane. Its function is as follows. F(1)F(0) ATP synthase produces ATP from ADP in the presence of a proton or sodium gradient. F-type ATPases consist of two structural domains, F(1) containing the extramembraneous catalytic core and F(0) containing the membrane proton channel, linked together by a central stalk and a peripheral stalk. During catalysis, ATP synthesis in the catalytic domain of F(1) is coupled via a rotary mechanism of the central stalk subunits to proton translocation. Functionally, component of the F(0) channel, it forms part of the peripheral stalk, linking F(1) to F(0). The b'-subunit is a diverged and duplicated form of b found in plants and photosynthetic bacteria. The sequence is that of ATP synthase subunit b' from Trichodesmium erythraeum (strain IMS101).